A 358-amino-acid polypeptide reads, in one-letter code: Magnesium-protoporphyrin IX monomethyl ester [oxidative] cyclase (358 aa).

Belongs to the AcsF family. The cofactor is Fe cation.

The catalysed reaction is Mg-protoporphyrin IX 13-monomethyl ester + 3 NADPH + 3 O2 + 2 H(+) = 3,8-divinyl protochlorophyllide a + 3 NADP(+) + 5 H2O. It functions in the pathway porphyrin-containing compound metabolism; chlorophyll biosynthesis (light-independent). Functionally, catalyzes the formation of the isocyclic ring in chlorophyll biosynthesis. Mediates the cyclase reaction, which results in the formation of divinylprotochlorophyllide (Pchlide) characteristic of all chlorophylls from magnesium-protoporphyrin IX 13-monomethyl ester (MgPMME). This chain is Magnesium-protoporphyrin IX monomethyl ester [oxidative] cyclase, found in Trichodesmium erythraeum (strain IMS101).